Consider the following 2118-residue polypeptide: Cilia- and flagella-associated protein 65 (2118 aa).

Residues 6–26 (GSLRALLLAAAAAAAAAAGAV) form a helical membrane-spanning segment. Residues 615-736 (FLHSNPEFGP…HTPRLTTDLP (122 aa)) enclose the MSP domain. Disordered stretches follow at residues 1007–1029 (APLL…LDAG), 1764–1909 (SGGS…DDFA), and 1924–1958 (AGGG…APPR). Residues 1825 to 1834 (GGAGGAPGGD) are compositionally biased toward gly residues. Residues 1840–1849 (RPGTPSMTAA) show a composition bias toward low complexity. A compositionally biased stretch (basic residues) spans 1850 to 1859 (AHHHHHHPRH). Low complexity-rich tracts occupy residues 1892–1902 (SISGAPDPDSA) and 1936–1949 (PGGS…ELAP). Positions 2016-2045 (AVRAAAEAARAEAEARAAAEAATKAAAEAE) form a coiled coil.

It belongs to the CFAP65 family.

It localises to the cell projection. Its subcellular location is the cilium. The protein resides in the flagellum membrane. It is found in the cytoplasm. May play a role in flagellar formation and mobility. The chain is Cilia- and flagella-associated protein 65 from Chlamydomonas reinhardtii (Chlamydomonas smithii).